A 248-amino-acid chain; its full sequence is Probable transcriptional regulatory protein Rsph17025_0577 (248 aa).

The segment at 1 to 21 (MAGHSKWANIQHRKGKQDKLR) is disordered.

The protein belongs to the TACO1 family.

Its subcellular location is the cytoplasm. The protein is Probable transcriptional regulatory protein Rsph17025_0577 of Cereibacter sphaeroides (strain ATCC 17025 / ATH 2.4.3) (Rhodobacter sphaeroides).